The sequence spans 941 residues: Isoleucine--tRNA ligase (941 aa).

A 'HIGH' region motif is present at residues 59–69 (PYANGNIHIGH). Glu562 contacts L-isoleucyl-5'-AMP. A 'KMSKS' region motif is present at residues 603 to 607 (KMSKS). Lys606 serves as a coordination point for ATP. Zn(2+) is bound by residues Cys904, Cys907, Cys924, and Cys927.

The protein belongs to the class-I aminoacyl-tRNA synthetase family. IleS type 1 subfamily. As to quaternary structure, monomer. Zn(2+) is required as a cofactor.

The protein resides in the cytoplasm. The enzyme catalyses tRNA(Ile) + L-isoleucine + ATP = L-isoleucyl-tRNA(Ile) + AMP + diphosphate. In terms of biological role, catalyzes the attachment of isoleucine to tRNA(Ile). As IleRS can inadvertently accommodate and process structurally similar amino acids such as valine, to avoid such errors it has two additional distinct tRNA(Ile)-dependent editing activities. One activity is designated as 'pretransfer' editing and involves the hydrolysis of activated Val-AMP. The other activity is designated 'posttransfer' editing and involves deacylation of mischarged Val-tRNA(Ile). This chain is Isoleucine--tRNA ligase, found in Haemophilus influenzae (strain PittEE).